The primary structure comprises 504 residues: ATP-dependent RNA helicase DBP3 (504 aa).

A compositionally biased stretch (basic and acidic residues) spans 1–14; sequence MSKDELKDKKRKVE. Residues 1–65 are disordered; it reads MSKDELKDKK…KSETESFAAS (65 aa). Residues 20–53 are compositionally biased toward basic residues; sequence SKKKLKKDKKDKKDKKDKKDKKDKKEKKEKKEKK. The Q motif signature appears at 94-120; the sequence is LDFSQVSFIDQIQKEISKFPKPTPIQA. A Helicase ATP-binding domain is found at 123-296; the sequence is WPYLLAGKDV…SSFMSEPVKV (174 aa). Position 136–143 (136–143) interacts with ATP; that stretch reads AETGSGKT. Residues 243-246 carry the DEAD box motif; that stretch reads DEAD. The Helicase C-terminal domain maps to 325 to 474; that stretch reads KLLELLKKYH…PVPEELKKFG (150 aa).

It belongs to the DEAD box helicase family. DDX5/DBP2 subfamily.

Its subcellular location is the nucleus. The protein localises to the nucleolus. The enzyme catalyses ATP + H2O = ADP + phosphate + H(+). Functionally, ATP-dependent RNA helicase required for 60S ribosomal subunit synthesis. Involved in efficient pre-rRNA processing, predominantly at site A3, which is necessary for the normal formation of 25S and 5.8S rRNAs. This is ATP-dependent RNA helicase DBP3 (DBP3) from Kluyveromyces lactis (strain ATCC 8585 / CBS 2359 / DSM 70799 / NBRC 1267 / NRRL Y-1140 / WM37) (Yeast).